A 296-amino-acid polypeptide reads, in one-letter code: Cytidine deaminase (296 aa).

2 consecutive CMP/dCMP-type deaminase domains span residues 47–167 and 186–296; these read AESE…FGPS and DSSD…LDPE. 88–90 contacts substrate; sequence NME. Histidine 101 is a Zn(2+) binding site. Glutamate 103 (proton donor) is an active-site residue. Residues cysteine 128 and cysteine 131 each contribute to the Zn(2+) site.

Belongs to the cytidine and deoxycytidylate deaminase family. As to quaternary structure, homodimer. Requires Zn(2+) as cofactor.

It catalyses the reaction cytidine + H2O + H(+) = uridine + NH4(+). It carries out the reaction 2'-deoxycytidine + H2O + H(+) = 2'-deoxyuridine + NH4(+). Functionally, this enzyme scavenges exogenous and endogenous cytidine and 2'-deoxycytidine for UMP synthesis. The polypeptide is Cytidine deaminase (Shewanella sediminis (strain HAW-EB3)).